Here is a 263-residue protein sequence, read N- to C-terminus: Small ribosomal subunit protein uS2 (263 aa).

An N-acetylserine modification is found at Ser-2. The span at 211–242 (EQTAEEEAEAAEGAEFEVEEEEVEQEWQEPAE) shows a compositional bias: acidic residues. The segment at 211–263 (EQTAEEEAEAAEGAEFEVEEEEVEQEWQEPAEADWNASAPPADWNDAANAEAF) is disordered. The segment covering 246–263 (NASAPPADWNDAANAEAF) has biased composition (low complexity).

The protein belongs to the universal ribosomal protein uS2 family. As to quaternary structure, component of the small ribosomal subunit. Mature ribosomes consist of a small (40S) and a large (60S) subunit. The 40S subunit contains about 33 different proteins and 1 molecule of RNA (18S). The 60S subunit contains about 49 different proteins and 3 molecules of RNA (25S, 5.8S and 5S). Interacts with RPS21.

The protein resides in the cytoplasm. In terms of biological role, required for the assembly and/or stability of the 40S ribosomal subunit. Required for the processing of the 20S rRNA-precursor to mature 18S rRNA in a late step of the maturation of 40S ribosomal subunits. In Komagataella phaffii (strain GS115 / ATCC 20864) (Yeast), this protein is Small ribosomal subunit protein uS2.